A 184-amino-acid polypeptide reads, in one-letter code: MSWRSEHIWIELIAGSRKISNFCWAIILFLGSLGFLLIGISSYLDRNLISLFPSQQIIFFPQGLVMSFYGLAGLFISSYLWCTISWNVGSGYDRFDRKEGIVCIFRWGFPGKNRRILLRLFMKDIQSIRIEVKEGFYARRVLYMEIRGQGAIPLTRTDENLTPREIEQKAAELAYFLRVPIEVF.

2 helical membrane passes run 22–42 (FCWAIILFLGSLGFLLIGISS) and 57–77 (IIFFPQGLVMSFYGLAGLFIS).

This sequence belongs to the Ycf4 family.

The protein resides in the plastid. Its subcellular location is the chloroplast thylakoid membrane. Its function is as follows. Seems to be required for the assembly of the photosystem I complex. In Populus alba (White poplar), this protein is Photosystem I assembly protein Ycf4.